The primary structure comprises 285 residues: Formamidopyrimidine-DNA glycosylase (285 aa).

The active-site Schiff-base intermediate with DNA is the Pro2. Glu3 functions as the Proton donor in the catalytic mechanism. Catalysis depends on Lys61, which acts as the Proton donor; for beta-elimination activity. DNA is bound by residues His102, Arg121, and Lys163. The FPG-type zinc finger occupies 249–283 (NAYGQAGKPCARCGTPIARETFMNRGSHFCNRCQK). The active-site Proton donor; for delta-elimination activity is the Arg273.

This sequence belongs to the FPG family. As to quaternary structure, monomer. Zn(2+) serves as cofactor.

It carries out the reaction Hydrolysis of DNA containing ring-opened 7-methylguanine residues, releasing 2,6-diamino-4-hydroxy-5-(N-methyl)formamidopyrimidine.. The catalysed reaction is 2'-deoxyribonucleotide-(2'-deoxyribose 5'-phosphate)-2'-deoxyribonucleotide-DNA = a 3'-end 2'-deoxyribonucleotide-(2,3-dehydro-2,3-deoxyribose 5'-phosphate)-DNA + a 5'-end 5'-phospho-2'-deoxyribonucleoside-DNA + H(+). Its function is as follows. Involved in base excision repair of DNA damaged by oxidation or by mutagenic agents. Acts as a DNA glycosylase that recognizes and removes damaged bases. Has a preference for oxidized purines, such as 7,8-dihydro-8-oxoguanine (8-oxoG). Has AP (apurinic/apyrimidinic) lyase activity and introduces nicks in the DNA strand. Cleaves the DNA backbone by beta-delta elimination to generate a single-strand break at the site of the removed base with both 3'- and 5'-phosphates. The polypeptide is Formamidopyrimidine-DNA glycosylase (Corynebacterium efficiens (strain DSM 44549 / YS-314 / AJ 12310 / JCM 11189 / NBRC 100395)).